The chain runs to 198 residues: Pyridoxal 5'-phosphate synthase subunit PdxT (198 aa).

49-51 (GES) contributes to the L-glutamine binding site. Residue Cys-81 is the Nucleophile of the active site. Residues Arg-112 and 140–141 (IR) each bind L-glutamine. Active-site charge relay system residues include His-176 and Glu-178.

This sequence belongs to the glutaminase PdxT/SNO family. In the presence of PdxS, forms a dodecamer of heterodimers. Only shows activity in the heterodimer.

It catalyses the reaction aldehydo-D-ribose 5-phosphate + D-glyceraldehyde 3-phosphate + L-glutamine = pyridoxal 5'-phosphate + L-glutamate + phosphate + 3 H2O + H(+). It carries out the reaction L-glutamine + H2O = L-glutamate + NH4(+). It participates in cofactor biosynthesis; pyridoxal 5'-phosphate biosynthesis. In terms of biological role, catalyzes the hydrolysis of glutamine to glutamate and ammonia as part of the biosynthesis of pyridoxal 5'-phosphate. The resulting ammonia molecule is channeled to the active site of PdxS. This chain is Pyridoxal 5'-phosphate synthase subunit PdxT, found in Methanocella arvoryzae (strain DSM 22066 / NBRC 105507 / MRE50).